Reading from the N-terminus, the 820-residue chain is Cell division control protein 48 homolog C (820 aa).

Disordered regions lie at residues 72-157 and 169-188; these read RVKD…RFDL and LNSS…VEVE. Residues 76–87 are compositionally biased toward acidic residues; the sequence is EDEDDNIGDEEG. Residues 85–122 adopt a coiled-coil conformation; sequence EEGSASQRKKQRRVDEKEEKLQRAEQSHLRKRNMERSV. Over residues 97 to 119 the composition is skewed to basic and acidic residues; the sequence is RVDEKEEKLQRAEQSHLRKRNME. The segment covering 121-142 has biased composition (low complexity); the sequence is SVSSSPSSSSSSEDSGDVSTSE. ATP-binding positions include 274–281 and 569–576; these read GPPGCGKT.

It belongs to the AAA ATPase family.

It is found in the nucleus. Its subcellular location is the cytoplasm. The protein resides in the cytoskeleton. It localises to the phragmoplast. In terms of biological role, probably functions in cell division and growth processes. Interacts with certain SNAREs as part of specialized membrane fusion events where vesicles from the same organelle fuse (homotypic fusion). In Arabidopsis thaliana (Mouse-ear cress), this protein is Cell division control protein 48 homolog C (CDC48C).